The following is an 830-amino-acid chain: MTTRREFIKRSAAVTAACTAGISLSGEASNVITDSEYTRLKWSKAPCRFCGTGCSVNVAVKDNQVVATHGDIQSEVNRGLNCVKGYFLSKIMYGKDRLTQPLLRKKNGEYHKDGDFTPVTWDEAFDVMAKQFKKTLKEKGPTAVGMFGSGQWTVWEGYAAVKLYKAGFRSNNIDPNARHCMASAVAGFMRTFGIDEPMGCYDDIEHADAFVLWGSNMAEMHPILWTRVTDRRLSHPHVKVAVLSTFQHRCFDLADLPIIFTPQADLAILNYIARYIIEKDMVNWDFVNKHVRFKVGAADIGYGLRPEHQLELAAANASNPGGAKDSSFEEYKNFLQQYDAQFVSKLSGASKEKLDQLAELYANPKTRVTSFWTMGFNQHTRGVWCNNLVYNLHLLTGKISSPGNSPFSLTGQPSACGTAREVGTFAHRLPADMVVTNPKHPEFAEKTWKIPPGVIPDKPGYHAVLQNRKLRDGELNAYWVQVNNNVQAAPNMLEETLPGYRNPNNFIVVSEAYPTVTSQAADLILPAAMWVEKEGAYGNAERRTQFWRQLVSAPGEAKSDLWQIMEFSKRFTTDEVWPEEILSKSPEFKGKSLFDVLFANNSVNKYSIEEIDPNYKNHESEHFGFYVQKGLFEEYAIFGRGHGHDLAEFDRYHEARGLRWPVVDGKETLWRFREGSDPYVKKGAGYQFYGHSDGKAIIFALPYEPPAESPDQDYPYWLVTGRVLEHWHSGSMTQRVPELYLAVPDALVYMHPDDARKLGVRRGDEIKVVSRRGEMRSRVETRGRNKPPVGLVFVPWFDASQLINKCTLDATDPISKQTDFKKCAVKLIKV.

The segment at residues 1–30 (MTTRREFIKRSAAVTAACTAGISLSGEASN) is a signal peptide (tat-type signal). The region spanning 40-96 (LKWSKAPCRFCGTGCSVNVAVKDNQVVATHGDIQSEVNRGLNCVKGYFLSKIMYGKD) is the 4Fe-4S Mo/W bis-MGD-type domain. Cys47, Cys50, Cys54, and Cys82 together coordinate [4Fe-4S] cluster. Mo-bis(molybdopterin guanine dinucleotide) is bound by residues Lys84, Gln151, Asn176, Cys180, 213–220 (WGSNMAEM), 244–248 (STFQH), Met374, Gln378, Asn484, 510–511 (SE), Lys533, Asp560, and 720–729 (TGRVLEHWHS). Trp796 serves as a coordination point for substrate. 2 residues coordinate Mo-bis(molybdopterin guanine dinucleotide): Asn804 and Lys821.

The protein belongs to the prokaryotic molybdopterin-containing oxidoreductase family. NasA/NapA/NarB subfamily. In terms of assembly, component of the periplasmic nitrate reductase NapAB complex composed of NapA and NapB. [4Fe-4S] cluster serves as cofactor. Mo-bis(molybdopterin guanine dinucleotide) is required as a cofactor. In terms of processing, predicted to be exported by the Tat system. The position of the signal peptide cleavage has not been experimentally proven.

The protein resides in the periplasm. The catalysed reaction is 2 Fe(II)-[cytochrome] + nitrate + 2 H(+) = 2 Fe(III)-[cytochrome] + nitrite + H2O. In terms of biological role, catalytic subunit of the periplasmic nitrate reductase complex NapAB. Receives electrons from NapB and catalyzes the reduction of nitrate to nitrite. This Hahella chejuensis (strain KCTC 2396) protein is Periplasmic nitrate reductase.